Consider the following 295-residue polypeptide: 5,10-methylenetetrahydrofolate reductase (295 aa).

The Proton donor/acceptor role is filled by Glu28. Thr59 is an NADH binding site. FAD-binding residues include His89, Arg119, Gly120, Asp121, Ala133, Tyr153, His157, Ala160, Asp166, Asn169, Arg172, and Lys173. Asp121 lines the (6S)-5-methyl-5,6,7,8-tetrahydrofolate pocket. Gln184 contributes to the NADH binding site. (6S)-5-methyl-5,6,7,8-tetrahydrofolate is bound by residues Gln184, Gln220, and Lys280.

This sequence belongs to the methylenetetrahydrofolate reductase family. It depends on FAD as a cofactor.

The catalysed reaction is (6S)-5-methyl-5,6,7,8-tetrahydrofolate + NAD(+) = (6R)-5,10-methylene-5,6,7,8-tetrahydrofolate + NADH + H(+). The protein operates within one-carbon metabolism; tetrahydrofolate interconversion. It functions in the pathway amino-acid biosynthesis; L-methionine biosynthesis via de novo pathway. Catalyzes the NADH-dependent reduction of 5,10-methylenetetrahydrofolate to 5-methyltetrahydrofolate. Is required to provide the methyl group necessary for methionine synthetase to convert homocysteine to methionine; the methyl group is given by 5-methyltetrahydrofolate. This is 5,10-methylenetetrahydrofolate reductase (metF) from Buchnera aphidicola subsp. Baizongia pistaciae (strain Bp).